The chain runs to 156 residues: MNLNATLIGQLIAFALFVWFCMKFVWPPIINAIETRQSQIANALASAEAAKKEQADTKNLVEQELSAAKLQAQDILDAANKRRNEVLDEVKAEAEELKAKIIAQGYAEVEAERKRVQEELRLKVASLAVAGAEKIVGRSIDEAANNDIIDKLVAEL.

A helical transmembrane segment spans residues 11–31 (LIAFALFVWFCMKFVWPPIIN).

It belongs to the ATPase B chain family. In terms of assembly, F-type ATPases have 2 components, F(1) - the catalytic core - and F(0) - the membrane proton channel. F(1) has five subunits: alpha(3), beta(3), gamma(1), delta(1), epsilon(1). F(0) has three main subunits: a(1), b(2) and c(10-14). The alpha and beta chains form an alternating ring which encloses part of the gamma chain. F(1) is attached to F(0) by a central stalk formed by the gamma and epsilon chains, while a peripheral stalk is formed by the delta and b chains.

It is found in the cell inner membrane. F(1)F(0) ATP synthase produces ATP from ADP in the presence of a proton or sodium gradient. F-type ATPases consist of two structural domains, F(1) containing the extramembraneous catalytic core and F(0) containing the membrane proton channel, linked together by a central stalk and a peripheral stalk. During catalysis, ATP synthesis in the catalytic domain of F(1) is coupled via a rotary mechanism of the central stalk subunits to proton translocation. Functionally, component of the F(0) channel, it forms part of the peripheral stalk, linking F(1) to F(0). The chain is ATP synthase subunit b from Haemophilus influenzae (strain 86-028NP).